The primary structure comprises 723 residues: MEHKPTHTSGQCPVMHGGATSSNSSNVAWWPKALNLDILHQHDRKSNPMGADFSYREELKKLDVEALKRDLKTLMTDSQDWWPADWGHYGGLMIRMAWHSAGSYRVGDGRGGADTGNQRFAPLNSWPDNANLDKARRLLWPIKQKYGNKISWADLMILAGNMAYESMGLKTFGFAFGREDIWHPEKDIYWGAEQEWLAPSGAENSRYSGERDLENPLAAVMMGLIYVNPEGVDGNPDPLKTAKDMRVTFARMGMNDEETVALTAGGHTVGKAHGNGNAANLGADPESADLEEQGLGWNNHKSRGIGRDTVTSGIEGAWTTNPTQWDNGFFHLLFSYDWWLQKSPAGAWQWEPVNIKEEDKPVDVEDPTIRHNPIMTDADMALKLDPEYRKISERFHKDPAYFSETFARAWFKLTHRDMGPKARYFGPDVPAETLIWQDPVPTGRKDYDVDAVKAKIIASGLSIGEMVSTAWDSARTFRNSDKRGGANGARIRLAPQKDWLGNEPEKLAKVLNVLEAIASEFNISVADTIVLAGNVGVEQAAKAAGIAITVPFAAGRGDATIEQTDVESFDVLEPIADGFRNWQKQHYAVNPEELLLDRAQLLGLSAPEMTVLIGGLRVLGTNHGGTKHGVFTDNVGALSNDFFVNLTDMRYTWKPTGRNSYDIVERNSGNVKWTATRVDLVFGSNSILRAYAEVYAQDDNKEKFVKDFVAAWTKVMNADRFDI.

Positions 98-226 (WHSAGSYRVG…LAAVMMGLIY (129 aa)) form a cross-link, tryptophyl-tyrosyl-methioninium (Trp-Tyr) (with M-252). Catalysis depends on H99, which acts as the Proton acceptor. The segment at residues 226 to 252 (YVNPEGVDGNPDPLKTAKDMRVTFARM) is a cross-link (tryptophyl-tyrosyl-methioninium (Tyr-Met) (with W-98)). H267 lines the heme b pocket.

This sequence belongs to the peroxidase family. Peroxidase/catalase subfamily. Homodimer or homotetramer. Heme b is required as a cofactor. In terms of processing, formation of the three residue Trp-Tyr-Met cross-link is important for the catalase, but not the peroxidase activity of the enzyme.

The catalysed reaction is H2O2 + AH2 = A + 2 H2O. It carries out the reaction 2 H2O2 = O2 + 2 H2O. In terms of biological role, bifunctional enzyme with both catalase and broad-spectrum peroxidase activity. The chain is Catalase-peroxidase from Vibrio vulnificus (strain CMCP6).